The sequence spans 490 residues: GTPase Der (490 aa).

2 EngA-type G domains span residues 3–166 and 203–376; these read PVVA…MDDV and IKLA…DSST. GTP-binding positions include 9–16, 56–60, 118–121, 209–216, 256–260, and 321–324; these read GRPNVGKS, DTGGI, NKTD, DTAGV, and NKWD. One can recognise a KH-like domain in the interval 377–461; sequence RRVSTAMLTR…PIRIQFKEGE (85 aa).

The protein belongs to the TRAFAC class TrmE-Era-EngA-EngB-Septin-like GTPase superfamily. EngA (Der) GTPase family. In terms of assembly, associates with the 50S ribosomal subunit.

Functionally, GTPase that plays an essential role in the late steps of ribosome biogenesis. The chain is GTPase Der from Salmonella newport (strain SL254).